The sequence spans 150 residues: Dynein light chain Tctex-type protein 2B (150 aa).

This sequence belongs to the dynein light chain Tctex-type family.

The protein localises to the dynein axonemal particle. In terms of biological role, acts as one of several non-catalytic accessory components of the cytoplasmic dynein 2 complex (dynein-2 complex), a motor protein complex that drives the movement of cargos along microtubules within cilia and flagella in concert with the intraflagellar transport (IFT) system. Required for proper retrograde ciliary transport. The protein is Dynein light chain Tctex-type protein 2B (dynlt2b) of Danio rerio (Zebrafish).